A 422-amino-acid polypeptide reads, in one-letter code: MALRGSHRLEVIFKRCIASPVFHSHAANRRSSQLAIKGTDPSSNGNSGQDQQNGEQKAKGWRRLVRFFVPFSLGAAVSAAVIKREDFTPTIAASKMTGRRRDFNFIADVVAGCADSVVYIEIKDTRHFDYFSGQPITASNGSGFIIEQNGLILTNAHVVINKPHTMVQVRLSDGRTFPATIEDVDQTSDLATLRIQVNNLSVMRLGKSSTLRSGEWVVALGSPLALSNTVTAGVISSTQRASQELGLRNRDINYLQTDAAITFGNSGGPLVNLDGEAIGVNSMKVTAGISFAIPIDYVKVFLERAAEKRKKGSAYKTGYPVKRYMGITMLTLTPDILFELKSRSQNMPSHLTHGVLVWKVIVGSPAHSGGLQPGDIVTHINKKEIKNSSDVYDALADNSKNLDIVILRGVKQMHVTITPEDP.

The transit peptide at 1 to 17 directs the protein to the mitochondrion; that stretch reads MALRGSHRLEVIFKRCI. A propeptide spanning residues 18-74 is cleaved from the precursor; that stretch reads ASPVFHSHAANRRSSQLAIKGTDPSSNGNSGQDQQNGEQKAKGWRRLVRFFVPFSLG. Polar residues predominate over residues 29 to 55; sequence RRSSQLAIKGTDPSSNGNSGQDQQNGE. The tract at residues 29–56 is disordered; it reads RRSSQLAIKGTDPSSNGNSGQDQQNGEQ. Residues 64 to 82 form a helical membrane-spanning segment; it reads LVRFFVPFSLGAAVSAAVI. 2 short sequence motifs (IAP-binding) span residues 75 to 78 and 94 to 97; these read AAVS and SKMT. The tract at residues 139–302 is serine protease; the sequence is SNGSGFIIEQ…IPIDYVKVFL (164 aa). Active-site charge relay system residues include His-157, Asp-189, and Ser-266. In terms of domain architecture, PDZ spans 325 to 410; that stretch reads MGITMLTLTP…NLDIVILRGV (86 aa).

This sequence belongs to the peptidase S1C family. Interacts with th/DIAP1 (via BIR 2 domain).

It is found in the mitochondrion intermembrane space. Its subcellular location is the mitochondrion membrane. It carries out the reaction Cleavage of non-polar aliphatic amino-acids at the P1 position, with a preference for Val, Ile and Met. At the P2 and P3 positions, Arg is selected most strongly with a secondary preference for other hydrophilic residues.. Serine protease that shows proteolytic activity against a non-specific substrate beta-casein. Promotes or induces cell death either by direct binding to and inhibition of BIRC proteins (also called inhibitor of apoptosis proteins, IAPs), leading to an increase in caspase activity, or by a BIRC inhibition-independent, caspase-independent and serine protease activity-dependent mechanism. Can antagonize antiapoptotic activity of th/Diap1 by directly inducing the degradation of th/Diap1. This is Serine protease HTRA2, mitochondrial from Drosophila yakuba (Fruit fly).